Consider the following 68-residue polypeptide: Peptide Smp13 (68 aa).

An N-terminal signal peptide occupies residues 1-23 (MKTQFAIFLITLVLFQMFSQSDA). Phenylalanine 36 is subject to Phenylalanine amide. Residues 37 to 68 (GKRGLGDHDDLDELFDGEISQADIDFLKEIMQ) constitute a propeptide that is removed on maturation.

The protein belongs to the non-disulfide-bridged peptide (NDBP) superfamily. Short antimicrobial peptide (group 4) family. Expressed by the venom gland.

It is found in the secreted. Functionally, peptide with unknown function. Does not show antimicrobial activity against the Gram-positive, and Gram-negative bacteria tested, as well as against the fungus C.albicans. In Scorpio palmatus (Israeli golden scorpion), this protein is Peptide Smp13.